A 281-amino-acid polypeptide reads, in one-letter code: NAC domain-containing protein 6 (281 aa).

Positions 4 to 156 (LPVGSRFCPT…QDALTGFADQ (153 aa)) constitute an NAC domain. Disordered regions lie at residues 84–109 (GGSE…QKGD) and 211–249 (LEGH…VTQE). Over residues 94–109 (NDGKKEIKDGHMQKGD) the composition is skewed to basic and acidic residues. A DNA-binding region spans residues 109–162 (DGLRASDDLQKVVLCRIRYKKEANVNEFGLVNHQAHQTQDALTGFADQLEMMLE). Residues 229–239 (QQQQQQQQQQQ) are compositionally biased toward low complexity.

It is found in the nucleus. The polypeptide is NAC domain-containing protein 6 (NAC006) (Arabidopsis thaliana (Mouse-ear cress)).